The primary structure comprises 248 residues: Octanoyltransferase (248 aa).

Residues 53 to 234 form the BPL/LPL catalytic domain; the sequence is ADTVDEIWIV…RLIANLDGES (182 aa). Residues 93–100, 165–167, and 178–180 contribute to the substrate site; these read RGGQITYH, ALG, and GLS. Cysteine 196 serves as the catalytic Acyl-thioester intermediate.

It belongs to the LipB family.

It is found in the cytoplasm. The catalysed reaction is octanoyl-[ACP] + L-lysyl-[protein] = N(6)-octanoyl-L-lysyl-[protein] + holo-[ACP] + H(+). It functions in the pathway protein modification; protein lipoylation via endogenous pathway; protein N(6)-(lipoyl)lysine from octanoyl-[acyl-carrier-protein]: step 1/2. Its function is as follows. Catalyzes the transfer of endogenously produced octanoic acid from octanoyl-acyl-carrier-protein onto the lipoyl domains of lipoate-dependent enzymes. Lipoyl-ACP can also act as a substrate although octanoyl-ACP is likely to be the physiological substrate. This is Octanoyltransferase from Burkholderia multivorans (strain ATCC 17616 / 249).